Consider the following 148-residue polypeptide: Calmodulin-4 (148 aa).

EF-hand domains follow at residues 8-43 (EEVA…LGKN), 44-79 (LPEK…YKKG), 80-115 (HRAG…LGES), and 116-148 (LSQE…HVEN). The Ca(2+) site is built by aspartate 21, asparagine 23, aspartate 25, histidine 27, glutamate 32, aspartate 57, aspartate 59, aspartate 61, lysine 63, glutamate 68, aspartate 93, asparagine 95, aspartate 97, tyrosine 99, and glutamate 104.

Functionally, implicated in the early stage of ectopic ossification. In Mus musculus (Mouse), this protein is Calmodulin-4 (Calm4).